The sequence spans 256 residues: Myeloblastin (256 aa).

Positions 1–25 (MAHRPPSPALASVLLALLLSGAARA) are cleaved as a signal peptide. The propeptide occupies 26–27 (AE). The 221-residue stretch at 28–248 (IVGGHEAQPH…YVDWIRSTLR (221 aa)) folds into the Peptidase S1 domain. A disulfide bridge links Cys-56 with Cys-72. Residues His-71 and Asp-118 each act as charge relay system in the active site. N-linked (GlcNAc...) asparagine glycans are attached at residues Asn-129 and Asn-174. Cystine bridges form between Cys-152/Cys-209, Cys-182/Cys-188, and Cys-199/Cys-224. Ser-203 serves as the catalytic Charge relay system. A propeptide spanning residues 249–256 (RVEAKGRP) is cleaved from the precursor.

It belongs to the peptidase S1 family. Elastase subfamily. In terms of assembly, may form dimers. Interacts with CD177; the interaction tethers PRTN3 to the cell surface; the interaction is direct. Interacts with SERPINB1. Interacts with ADGRG3. Expressed in polymorphonuclear leukocytes (at protein level). Expressed in neutrophils (at protein level). Expressed in differentiating neutrophils.

It is found in the cytoplasmic granule. It localises to the secreted. The protein localises to the cell membrane. The protein resides in the membrane raft. The catalysed reaction is Hydrolysis of proteins, including elastin, by preferential cleavage: -Ala-|-Xaa- &gt; -Val-|-Xaa-.. With respect to regulation, inhibited by phenylmethanesulfonyl fluoride (PMSF) and diisopropyl fluorophosphate (DFP). In terms of biological role, serine protease that degrades elastin, fibronectin, laminin, vitronectin, and collagen types I, III, and IV (in vitro). By cleaving and activating receptor F2RL1/PAR-2, enhances endothelial cell barrier function and thus vascular integrity during neutrophil transendothelial migration. Plays a role in neutrophil transendothelial migration, probably when associated with CD177. Triggers inflammatory processes in neutrophils by interacting with ADGRG3 upstream of F2RL1/PAR2 activation. This is Myeloblastin (PRTN3) from Homo sapiens (Human).